Here is a 65-residue protein sequence, read N- to C-terminus: Disintegrin VLO4 (65 aa).

In terms of domain architecture, Disintegrin spans M1 to G65. 4 disulfides stabilise this stretch: C7/C30, C21/C27, C26/C51, and C39/C58. The short motif at R43 to D45 is the Cell attachment site element.

It belongs to the disintegrin family. Dimeric disintegrin subfamily. In terms of assembly, homodimer; disulfide-linked. As to expression, expressed by the venom gland.

It localises to the secreted. Poor inhibitor of platelet aggregation. The disintegrin inhibits the adhesion of cells expressing the RGD-dependent integrin alpha-5/beta-1 (ITGA5/ITGB1) to immobilized fibronectin. Inhibition on alpha-2b/beta-3 (ITGA2B/ITGB3) is low. This Macrovipera lebetina obtusa (Levant blunt-nosed viper) protein is Disintegrin VLO4.